Here is an 875-residue protein sequence, read N- to C-terminus: Leucine--tRNA ligase (875 aa).

The short motif at 57–67 (PYPSGQIHMGH) is the 'HIGH' region element. The 'KMSKS' region signature appears at 631 to 635 (KMSKS). Position 634 (Lys634) interacts with ATP.

This sequence belongs to the class-I aminoacyl-tRNA synthetase family.

It is found in the cytoplasm. It carries out the reaction tRNA(Leu) + L-leucine + ATP = L-leucyl-tRNA(Leu) + AMP + diphosphate. The protein is Leucine--tRNA ligase of Granulibacter bethesdensis (strain ATCC BAA-1260 / CGDNIH1).